Here is a 102-residue protein sequence, read N- to C-terminus: Protein RnfH (102 aa).

This sequence belongs to the UPF0125 (RnfH) family.

This is Protein RnfH from Pseudomonas entomophila (strain L48).